We begin with the raw amino-acid sequence, 551 residues long: Glucans biosynthesis protein D (551 aa).

The tat-type signal signal peptide spans 1-32 (MDRRRFIKGSMAMAAVCGTSGIASLFSQAAFA).

Belongs to the OpgD/OpgG family. Predicted to be exported by the Tat system. The position of the signal peptide cleavage has not been experimentally proven.

The protein localises to the periplasm. It functions in the pathway glycan metabolism; osmoregulated periplasmic glucan (OPG) biosynthesis. Its function is as follows. Probably involved in the control of the structural glucose backbone of osmoregulated periplasmic glucans (OPGs). This is Glucans biosynthesis protein D from Escherichia coli (strain K12 / MC4100 / BW2952).